The sequence spans 705 residues: Ion-translocating oxidoreductase complex subunit C (705 aa).

4Fe-4S ferredoxin-type domains lie at 368–397 (MGETPEEQGCIRCSACADACPADLLPQQLY) and 407–435 (KATAHNIADCIECGACAWVCPSSIPLVQY). 8 residues coordinate [4Fe-4S] cluster: C377, C380, C383, C387, C416, C419, C422, and C426. The disordered stretch occupies residues 536–684 (RARQAENIPA…EPVDPRKAAV (149 aa)).

Belongs to the 4Fe4S bacterial-type ferredoxin family. RnfC subfamily. As to quaternary structure, the complex is composed of six subunits: RnfA, RnfB, RnfC, RnfD, RnfE and RnfG. [4Fe-4S] cluster is required as a cofactor.

The protein resides in the cell inner membrane. Functionally, part of a membrane-bound complex that couples electron transfer with translocation of ions across the membrane. This chain is Ion-translocating oxidoreductase complex subunit C, found in Citrobacter koseri (strain ATCC BAA-895 / CDC 4225-83 / SGSC4696).